We begin with the raw amino-acid sequence, 115 residues long: Secapin (115 aa).

The first 24 residues, 1–24 (MRFQVYILHLCFFILVVLTYLSQG), serve as a signal peptide directing secretion. Positions 25–90 (QSYTTTTTTS…STENFDITNR (66 aa)) are excised as a propeptide. C99 and C110 are oxidised to a cystine.

It belongs to the secapin family. As to expression, expressed in the epidermis, fat body and venom gland.

It localises to the secreted. Its function is as follows. Serine protease inhibitor which exhibits antifibrinolytic, antielastolytic and antimicrobial activities. Displays antimicrobial activity against bacteria and fungi. Likely functions in the innate immune response to microbial infection and possibly in the venom, as an antifibrinolytic agent. The recombinant form inhibits trypsin (IC(50)=80.02 nM, Ki=127.25 nM), chymotrypsin (IC(50)=393.78 nM, Ki=432.59 nM), the microbial serine proteases subtilisin A (IC(50)=379.20 nM, Ki=492.77 nM) and proteinase K (IC(50)=189.43 nM, Ki=271.76 nM), plasmin (IC(50)=457.98 nM, Ki=502.91 nM), human elastase (IC(50)=347.81 nM, Ki=469.90 nM) and porcine elastase (IC(50)=94.70 nM, Ki=125.62 nM). Does not inhibit thrombin. Binds to human plasmin and inhibits the plasmin-mediated degradation of fibrin to fibrin degradation products, indicating its role as an anti-fibrinolytic agent. Also binds to bacterial and fungal surfaces. Exhibits antimicrobial activity against the Gram-positive bacteria B.thuringiensis (MIC=4.21 uM) and P.larvae (MIC=11.13 uM), the Gram-negative bacteria E.coli (MIC=6.50 uM) and the multidrug-resistant A.baumannii (MIC=5 ug/ml, MBC=10 ug/ml), as well as against the fungus B.bassiana (IC(50)=2.57 uM). The synthetic peptide also exhibits antimicrobial activity against the Gram-positive bacterium P.larvae (MIC=41.12 uM), the Gram-negative bacterium P.aeruginosa (MIC=65.75 uM), and the fungus B.bassiana (IC(50)=44.27 uM). Is also able to prevent A.baumannii biofilm formation and eliminate established A.baumannii biofilms. In vitro, does not induce an inflammatory response and has no cytotoxic activity against mammalian cells. The protein is Secapin of Apis cerana (Indian honeybee).